The primary structure comprises 100 residues: Urease subunit gamma (100 aa).

This sequence belongs to the urease gamma subunit family. Heterotrimer of UreA (gamma), UreB (beta) and UreC (alpha) subunits. Three heterotrimers associate to form the active enzyme.

Its subcellular location is the cytoplasm. It catalyses the reaction urea + 2 H2O + H(+) = hydrogencarbonate + 2 NH4(+). The protein operates within nitrogen metabolism; urea degradation; CO(2) and NH(3) from urea (urease route): step 1/1. This Synechocystis sp. (strain ATCC 27184 / PCC 6803 / Kazusa) protein is Urease subunit gamma.